A 493-amino-acid polypeptide reads, in one-letter code: Trans-aconitate decarboxylase 1 (493 aa).

Residues 1-22 (MAPALNANPTTKRDELSAPSAS) are disordered.

This sequence belongs to the class-II fumarase/aspartase family.

The protein localises to the cytoplasm. It is found in the cytosol. The protein resides in the nucleus. The catalysed reaction is trans-aconitate + H(+) = itaconate + CO2. The protein operates within secondary metabolite biosynthesis. Its function is as follows. Trans-aconitate decarboxylase; part of the gene cluster that mediates the biosynthesis of itaconic acid and 2-hydroxyparaconate. Cis-aconitate is secreted by the mitochondrial tricarboxylate transporter MTT1. In the cytosol cis-aconitate is converted into trans-aconitate via isomerization by the aconitate-delta-isomerase ADI1. Decarboxylation of trans-aconitate by the trans-aconitate decarboxylase TAD1 then leads then to the production of itaconic acid. The cytochrome P450 monooxygenase CYP3 further converts itaconate to 2-hydroxyparaconate via oxidation of the double bond, leading to a transient epoxide, which can subsequently be lactonized to produce 2-hydroxyparaconate. Secretion of itaconate and possibly 2-hydroxyparaconate into the medium is mediated by the major facilitator ITP1. The glyoxalase domain-containing protein RDO1 is not involved in the biosynthesis of itaconate and 2-hydroxyparaconate, however, it might play a role in the further conversion of 2-hydroxyparaconate to itatartarate. The polypeptide is Trans-aconitate decarboxylase 1 (Mycosarcoma maydis (Corn smut fungus)).